We begin with the raw amino-acid sequence, 147 residues long: Hemoglobin subunit beta (147 aa).

An N-acetylvaline modification is found at V2. A Globin domain is found at 3–147 (HLTGEEKAAV…VANALAHKYH (145 aa)). Residue T13 is modified to Phosphothreonine. S45 carries the phosphoserine modification. At K60 the chain carries N6-acetyllysine. A heme b-binding site is contributed by H64. K83 carries the post-translational modification N6-acetyllysine. H93 is a binding site for heme b. C94 is subject to S-nitrosocysteine. An N6-acetyllysine modification is found at K145.

The protein belongs to the globin family. As to quaternary structure, heterotetramer of two alpha chains and two beta chains. As to expression, red blood cells.

Involved in oxygen transport from the lung to the various peripheral tissues. The sequence is that of Hemoglobin subunit beta (HBB) from Ateles belzebuth (White-bellied spider monkey).